A 959-amino-acid polypeptide reads, in one-letter code: Xylosyltransferase 1 (959 aa).

The Cytoplasmic segment spans residues 1–17 (MVAAPCARRLARRSHSA). A helical; Signal-anchor for type II membrane protein transmembrane segment spans residues 18–38 (LLAALTVLLLQTLVVWNFSSL). Residues 39–959 (DSGAGERRGG…GAVKPDGRLR (921 aa)) are Lumenal-facing. Residues 42 to 259 (AGERRGGAAV…KYDQPPKCDI (218 aa)) form a disordered region. Positions 78–104 (RGGGGGGGGGGGGRGPQARARGGGPGE) are enriched in gly residues. Positions 145–161 (KVRTDSNNENSVPKDFE) are enriched in basic and acidic residues. Residues 163–172 (VDNSNFAPRT) show a composition bias toward polar residues. Basic and acidic residues predominate over residues 177 to 204 (HQPELAKKPPSRQKELLKRKLEQQEKGK). Asn-226 carries N-linked (GlcNAc...) asparagine glycosylation. The segment covering 249–259 (TKYDQPPKCDI) has biased composition (basic and acidic residues). 4 disulfides stabilise this stretch: Cys-257/Cys-285, Cys-301/Cys-542, Cys-561/Cys-574, and Cys-563/Cys-572. UDP-alpha-D-xylose is bound by residues Val-333, Asp-361, and 390–392 (TIW). The N-linked (GlcNAc...) asparagine glycan is linked to Asn-421. 494–495 (DW) contributes to the UDP-alpha-D-xylose binding site. Residues Ser-575 and 598–599 (RK) contribute to the UDP-alpha-D-xylose site. 2 disulfides stabilise this stretch: Cys-675–Cys-927 and Cys-920–Cys-933. A glycan (N-linked (GlcNAc...) asparagine) is linked at Asn-777. The segment at 940-959 (SFSPDPKSELGAVKPDGRLR) is disordered.

The protein belongs to the glycosyltransferase 14 family. XylT subfamily. Monomer. It depends on a divalent metal cation as a cofactor. Contains 7 disulfide bonds. Post-translationally, N-glycosylated. Widely expressed. Expressed at higher level in placenta, kidney and pancreas. Weakly expressed in skeletal muscle.

It localises to the golgi apparatus membrane. The protein localises to the secreted. The catalysed reaction is UDP-alpha-D-xylose + L-seryl-[protein] = 3-O-(beta-D-xylosyl)-L-seryl-[protein] + UDP + H(+). Its pathway is glycan metabolism; chondroitin sulfate biosynthesis. The protein operates within glycan metabolism; heparan sulfate biosynthesis. Functionally, catalyzes the first step in the biosynthesis of chondroitin sulfate and dermatan sulfate proteoglycans, such as DCN. Transfers D-xylose from UDP-D-xylose to specific serine residues of the core protein. Required for normal embryonic and postnatal skeleton development, especially of the long bones. Required for normal maturation of chondrocytes during bone development, and normal onset of ossification. The chain is Xylosyltransferase 1 (XYLT1) from Homo sapiens (Human).